The following is a 111-amino-acid chain: X antigen family member 3 (111 aa).

The disordered stretch occupies residues 1–111 (MIWRGRSTYR…PEGGDRQPQV (111 aa)). Positions 29–40 (PGDEEPQQEEPP) are enriched in acidic residues. Basic and acidic residues predominate over residues 97–111 (EQFKMPEGGDRQPQV).

It belongs to the GAGE family.

The sequence is that of X antigen family member 3 (XAGE3) from Homo sapiens (Human).